A 210-amino-acid chain; its full sequence is ATP-dependent dethiobiotin synthetase BioD (210 aa).

13 to 18 (GIGKTV) contacts ATP. Threonine 17 contacts Mg(2+). The active site involves lysine 33. Glutamate 101 serves as a coordination point for Mg(2+). ATP is bound by residues 101-104 (EGAG) and 185-187 (PWL).

It belongs to the dethiobiotin synthetase family. In terms of assembly, homodimer. The cofactor is Mg(2+).

The protein localises to the cytoplasm. The enzyme catalyses (7R,8S)-7,8-diammoniononanoate + CO2 + ATP = (4R,5S)-dethiobiotin + ADP + phosphate + 3 H(+). The protein operates within cofactor biosynthesis; biotin biosynthesis; biotin from 7,8-diaminononanoate: step 1/2. Its function is as follows. Catalyzes a mechanistically unusual reaction, the ATP-dependent insertion of CO2 between the N7 and N8 nitrogen atoms of 7,8-diaminopelargonic acid (DAPA, also called 7,8-diammoniononanoate) to form a ureido ring. This is ATP-dependent dethiobiotin synthetase BioD from Bradyrhizobium sp. (strain BTAi1 / ATCC BAA-1182).